The following is a 203-amino-acid chain: Outer-membrane lipoprotein carrier protein (203 aa).

The first 21 residues, 1–21 (MKKLAITCALLSGMVVSQVWA), serve as a signal peptide directing secretion.

It belongs to the LolA family. Monomer.

The protein localises to the periplasm. Its function is as follows. Participates in the translocation of lipoproteins from the inner membrane to the outer membrane. Only forms a complex with a lipoprotein if the residue after the N-terminal Cys is not an aspartate (The Asp acts as a targeting signal to indicate that the lipoprotein should stay in the inner membrane). The chain is Outer-membrane lipoprotein carrier protein from Klebsiella pneumoniae subsp. pneumoniae (strain ATCC 700721 / MGH 78578).